We begin with the raw amino-acid sequence, 387 residues long: 3-ketoacyl-CoA thiolase (387 aa).

Residue cysteine 91 is the Acyl-thioester intermediate of the active site. Catalysis depends on proton acceptor residues histidine 343 and cysteine 373.

The protein belongs to the thiolase-like superfamily. Thiolase family. In terms of assembly, heterotetramer of two alpha chains (FadB) and two beta chains (FadA).

It is found in the cytoplasm. The catalysed reaction is an acyl-CoA + acetyl-CoA = a 3-oxoacyl-CoA + CoA. Its pathway is lipid metabolism; fatty acid beta-oxidation. Functionally, catalyzes the final step of fatty acid oxidation in which acetyl-CoA is released and the CoA ester of a fatty acid two carbons shorter is formed. This is 3-ketoacyl-CoA thiolase from Escherichia coli O1:K1 / APEC.